Here is a 450-residue protein sequence, read N- to C-terminus: Caspase Dronc (450 aa).

Residues 1–134 constitute a propeptide that is removed on maturation; sequence MQPPELEIGM…RTSRKSADIV (134 aa). The region spanning 64–109 is the CARD domain; that stretch reads EKDVRVEQHRRLLLKITQRGPTAYNLLINALRNINCLDAAVLLESV. The interval 114–125 is required for binding Diap1; the sequence is SRPPFISLNERR. Active-site residues include His-271 and Cys-318. The propeptide occupies 321 to 324; the sequence is DEYD.

Belongs to the peptidase C14A family. As to quaternary structure, interacts (via residues 114-125) with Diap1 (via BIR 2 domain); binding blocks Dronc-mediated cell death. Can form a stable complex with Drice. Rpr, hid and grim can out-compete Dronc for binding Diap1, therefore removing Diap1-mediated ubiquitination. Interacts (via CARD domain) with Dark (via Dark CARD and WD domains); the interaction stimulates Dark oligomerization to form the apoptosome and brings pairs of Dronc molecules together on the apoptosome to facilitate their dimerization and activation by autocatalytic cleavage. Binding to Dark stimulates apoptosome assembly. After autocatalytic cleavage the Dronc caspase domain dissociates from the apoptosome but the CARD domain remains associated. Ubiquitinated by Diap1, leading to its subsequent degradation. Ubiquitously expressed in embryos during early stages of development. In late third instar larvae, dramatic up-regulation in salivary glands and midgut before histolysis of these tissues.

It is found in the cytoplasm. It catalyses the reaction Strict requirement for an Asp residue at position P1 and with a marked preference for His at position P2. It has a preferred cleavage sequence of Leu-Gly-His-Asp-|-Xaa.. Zymogen activated by autocatalytic cleavage; association with the Dark apoptosome brings multiple molecules together to facilitate their dimerization and activation by autocatalytic cleavage. In terms of biological role, involved in the activation cascade of caspases responsible for apoptosis execution. Effector of steroid-mediated apoptosis during insect metamorphosis. Overexpression promotes programmed cell death. Interaction with Diap1 is required to suppress Dronc-mediated cell death; via Diap1-mediated ubiquitination of Dronc. Rate-limiting caspase in rpr, grim and hid death pathway. Recruited to the Dark apoptosome, an adapter protein complex that mediates activation of the caspase cascade in programmed cell death initiated by the intrinsic apoptosis pathway. Association with the Dark apoptosome stimulates autocatalytic cleavage and activation of Dronc, promoting Dronc-mediated cleavage of downstream effector caspases such as Drice. This chain is Caspase Dronc, found in Drosophila melanogaster (Fruit fly).